Reading from the N-terminus, the 147-residue chain is Ribosome maturation factor RimP (147 aa).

The protein belongs to the RimP family.

It localises to the cytoplasm. In terms of biological role, required for maturation of 30S ribosomal subunits. The protein is Ribosome maturation factor RimP of Thermosipho melanesiensis (strain DSM 12029 / CIP 104789 / BI429).